The following is a 279-amino-acid chain: Dermonecrotic toxin StSicTox-betaIB1i (279 aa).

Histidine 12 is a catalytic residue. The Mg(2+) site is built by glutamate 32 and aspartate 34. The active-site Nucleophile is histidine 48. Intrachain disulfides connect cysteine 52-cysteine 58 and cysteine 54-cysteine 198. Residue aspartate 92 participates in Mg(2+) binding.

It belongs to the arthropod phospholipase D family. Class II subfamily. Class IIb sub-subfamily. Mg(2+) is required as a cofactor. Expressed by the venom gland.

The protein localises to the secreted. The catalysed reaction is an N-(acyl)-sphingosylphosphocholine = an N-(acyl)-sphingosyl-1,3-cyclic phosphate + choline. It catalyses the reaction N-hexanoyl-sphing-4-enine-1-phosphocholine = N-(hexanoyl)-sphing-4-enine-1,3-cyclic phosphate + choline. It carries out the reaction an N-(acyl)-sphingosylphosphoethanolamine = an N-(acyl)-sphingosyl-1,3-cyclic phosphate + ethanolamine. The enzyme catalyses N-dodecanoyl-heptadecasphing-4-enine-1-phosphoethanolamine = N-dodecanoyl-heptadecasphing-4-enine-1,3-cyclic phosphate + ethanolamine. The catalysed reaction is a 1-acyl-sn-glycero-3-phosphoethanolamine = a 1-acyl-sn-glycero-2,3-cyclic phosphate + ethanolamine. It catalyses the reaction 1-tetradecanoyl-sn-glycero-3-phosphoethanolamine = 1-tetradecanoyl-sn-glycero-2,3-cyclic phosphate + ethanolamine. In terms of biological role, dermonecrotic toxins cleave the phosphodiester linkage between the phosphate and headgroup of certain phospholipids (sphingolipid and lysolipid substrates), forming an alcohol (often choline) and a cyclic phosphate. This toxin acts on lysophosphatidylethanolamine (LPE) and ceramide phosphoethanolamine (CPE) with high activity. This toxin acts on sphingomyelin (SM) with very low activity and is not active on lysophosphatidylserine (LPS), lysophosphatidylcholine (LPC) and lysophosphatidylglycerol (LPG). It acts by transphosphatidylation, releasing exclusively cyclic phosphate as second products. It is not surprising that spider toxins have affinity for ethanolamine-containing sphingolipids since they are common in insect prey. Induces dermonecrosis, hemolysis, increased vascular permeability, edema, inflammatory response, and platelet aggregation. This is Dermonecrotic toxin StSicTox-betaIB1i from Sicarius terrosus (Cave spider).